Here is a 362-residue protein sequence, read N- to C-terminus: Chorismate synthase (362 aa).

Arginine 48 and arginine 54 together coordinate NADP(+). Residues 131–133 (RSS), 243–244 (NA), glycine 287, 302–306 (KPTSS), and arginine 328 contribute to the FMN site.

This sequence belongs to the chorismate synthase family. In terms of assembly, homotetramer. FMNH2 is required as a cofactor.

The catalysed reaction is 5-O-(1-carboxyvinyl)-3-phosphoshikimate = chorismate + phosphate. Its pathway is metabolic intermediate biosynthesis; chorismate biosynthesis; chorismate from D-erythrose 4-phosphate and phosphoenolpyruvate: step 7/7. Its function is as follows. Catalyzes the anti-1,4-elimination of the C-3 phosphate and the C-6 proR hydrogen from 5-enolpyruvylshikimate-3-phosphate (EPSP) to yield chorismate, which is the branch point compound that serves as the starting substrate for the three terminal pathways of aromatic amino acid biosynthesis. This reaction introduces a second double bond into the aromatic ring system. The chain is Chorismate synthase from Bradyrhizobium diazoefficiens (strain JCM 10833 / BCRC 13528 / IAM 13628 / NBRC 14792 / USDA 110).